Here is a 467-residue protein sequence, read N- to C-terminus: Asparagine--tRNA ligase (467 aa).

This sequence belongs to the class-II aminoacyl-tRNA synthetase family. Homodimer.

Its subcellular location is the cytoplasm. It carries out the reaction tRNA(Asn) + L-asparagine + ATP = L-asparaginyl-tRNA(Asn) + AMP + diphosphate + H(+). The sequence is that of Asparagine--tRNA ligase from Legionella pneumophila (strain Lens).